Here is a 131-residue protein sequence, read N- to C-terminus: SPbeta prophage-derived uncharacterized protein YomZ (131 aa).

The polypeptide is SPbeta prophage-derived uncharacterized protein YomZ (yomZ) (Bacillus subtilis (strain 168)).